A 153-amino-acid chain; its full sequence is Insulin-like growth factor 1 (153 aa).

Residues 49 to 77 (GPETLCGAELVDALQFVCGDRGFYFNKPT) form a b region. Intrachain disulfides connect cysteine 54–cysteine 96, cysteine 66–cysteine 109, and cysteine 95–cysteine 100. Residues 78–89 (GYGSSSRRAPQT) form a c region. An a region spans residues 90 to 110 (GIVDECCFRSCDLRRLEMYCA). The segment at 111–118 (PLKPAKSA) is d. Residues 119–153 (RSVRAQRHTDMPKAQKEVHLKNASRGSAGNKNYRM) constitute a propeptide, e peptide. Positions 120–153 (SVRAQRHTDMPKAQKEVHLKNASRGSAGNKNYRM) are disordered. Residues 125–138 (RHTDMPKAQKEVHL) are compositionally biased toward basic and acidic residues. Over residues 142-153 (SRGSAGNKNYRM) the composition is skewed to polar residues.

This sequence belongs to the insulin family. Forms a ternary complex with IGFR1 and ITGAV:ITGB3. Forms a ternary complex with IGFR1 and ITGA6:ITGB4. Forms a ternary complex with IGFBP3 and ALS.

The protein resides in the secreted. Its function is as follows. The insulin-like growth factors, isolated from plasma, are structurally and functionally related to insulin but have a much higher growth-promoting activity. May be a physiological regulator of [1-14C]-2-deoxy-D-glucose (2DG) transport and glycogen synthesis in osteoblasts. Stimulates glucose transport in bone-derived osteoblastic (PyMS) cells and is effective at much lower concentrations than insulin, not only regarding glycogen and DNA synthesis but also with regard to enhancing glucose uptake. May play a role in synapse maturation. Ca(2+)-dependent exocytosis of IGF1 is required for sensory perception of smell in the olfactory bulb. Acts as a ligand for IGF1R. Binds to the alpha subunit of IGF1R, leading to the activation of the intrinsic tyrosine kinase activity which autophosphorylates tyrosine residues in the beta subunit thus initiating a cascade of down-stream signaling events leading to activation of the PI3K-AKT/PKB and the Ras-MAPK pathways. Binds to integrins ITGAV:ITGB3 and ITGA6:ITGB4. Its binding to integrins and subsequent ternary complex formation with integrins and IGFR1 are essential for IGF1 signaling. Induces the phosphorylation and activation of IGFR1, MAPK3/ERK1, MAPK1/ERK2 and AKT1. As part of the MAPK/ERK signaling pathway, acts as a negative regulator of apoptosis in cardiomyocytes via promotion of STUB1/CHIP-mediated ubiquitination and degradation of ICER-type isoforms of CREM. This is Insulin-like growth factor 1 from Panthera tigris altaica (Siberian tiger).